Consider the following 540-residue polypeptide: Chaperonin GroEL (540 aa).

Residues 29–32 (TLGP), 86–90 (DGTTT), Gly-413, 477–479 (DAL), and Asp-493 contribute to the ATP site.

This sequence belongs to the chaperonin (HSP60) family. In terms of assembly, forms a cylinder of 14 subunits composed of two heptameric rings stacked back-to-back. Interacts with the co-chaperonin GroES.

The protein localises to the cytoplasm. The enzyme catalyses ATP + H2O + a folded polypeptide = ADP + phosphate + an unfolded polypeptide.. Its function is as follows. Together with its co-chaperonin GroES, plays an essential role in assisting protein folding. The GroEL-GroES system forms a nano-cage that allows encapsulation of the non-native substrate proteins and provides a physical environment optimized to promote and accelerate protein folding. The sequence is that of Chaperonin GroEL from Clostridium botulinum (strain Alaska E43 / Type E3).